A 553-amino-acid polypeptide reads, in one-letter code: Chaperonin GroEL (553 aa).

Residues 29–32, Lys-50, 86–90, Gly-424, and Asp-504 each bind ATP; these read TLGP and DGTTT.

Belongs to the chaperonin (HSP60) family. Forms a cylinder of 14 subunits composed of two heptameric rings stacked back-to-back. Interacts with the co-chaperonin GroES.

It is found in the cytoplasm. It catalyses the reaction ATP + H2O + a folded polypeptide = ADP + phosphate + an unfolded polypeptide.. Functionally, together with its co-chaperonin GroES, plays an essential role in assisting protein folding. The GroEL-GroES system forms a nano-cage that allows encapsulation of the non-native substrate proteins and provides a physical environment optimized to promote and accelerate protein folding. The chain is Chaperonin GroEL from Koribacter versatilis (strain Ellin345).